The sequence spans 240 residues: Alkaline phosphatase synthesis transcriptional regulatory protein PhoP (240 aa).

One can recognise a Response regulatory domain in the interval 4 to 118 (KILVVDDEES…EVNARVKAIL (115 aa)). Aspartate 53 is subject to 4-aspartylphosphate. The segment at residues 136–235 (EGQIVIGDLK…IRGLGYKLEE (100 aa)) is a DNA-binding region (ompR/PhoB-type).

In terms of processing, phosphorylated by PhoR.

It is found in the cytoplasm. Member of the two-component regulatory system PhoP/PhoR involved in the regulation of alkaline phosphatase genes phoA and phoB and of phosphodiesterase. In Bacillus subtilis (strain 168), this protein is Alkaline phosphatase synthesis transcriptional regulatory protein PhoP (phoP).